We begin with the raw amino-acid sequence, 375 residues long: Chaperone protein DnaJ (375 aa).

Residues 5–70 (DYYEVLGVAR…NKRRAYDAHG (66 aa)) form the J domain. The CR-type zinc finger occupies 131 to 208 (GIERRIEIPT…CHGAGRVEED (78 aa)). Residues Cys144, Cys147, Cys160, Cys163, Cys182, Cys185, Cys196, and Cys199 each coordinate Zn(2+). CXXCXGXG motif repeat units follow at residues 144-151 (CAPCHGSG), 160-167 (CGTCHGRG), 182-189 (CPHCDGRG), and 196-203 (CKTCHGAG).

Belongs to the DnaJ family. Homodimer. Requires Zn(2+) as cofactor.

It localises to the cytoplasm. Participates actively in the response to hyperosmotic and heat shock by preventing the aggregation of stress-denatured proteins and by disaggregating proteins, also in an autonomous, DnaK-independent fashion. Unfolded proteins bind initially to DnaJ; upon interaction with the DnaJ-bound protein, DnaK hydrolyzes its bound ATP, resulting in the formation of a stable complex. GrpE releases ADP from DnaK; ATP binding to DnaK triggers the release of the substrate protein, thus completing the reaction cycle. Several rounds of ATP-dependent interactions between DnaJ, DnaK and GrpE are required for fully efficient folding. Also involved, together with DnaK and GrpE, in the DNA replication of plasmids through activation of initiation proteins. The sequence is that of Chaperone protein DnaJ from Xanthomonas axonopodis pv. citri (strain 306).